A 1157-amino-acid chain; its full sequence is uncharacterized protein (1157 aa).

The N-terminal stretch at 1-18 (MNRNIFITLLISLLALSG) is a signal peptide. The N-palmitoyl cysteine moiety is linked to residue cysteine 19. Cysteine 19 carries the S-diacylglycerol cysteine lipid modification. A run of 4 helical transmembrane segments spans residues 292-312 (LSVS…FLIG), 394-414 (LGFI…LLIF), 423-443 (ALIT…FMLF), and 458-478 (ISYA…GMII). Residues 1134 to 1157 (QYQKPVENSGRKLRKLEDHLRNMK) are disordered. The span at 1148-1157 (KLEDHLRNMK) shows a compositional bias: basic and acidic residues.

It belongs to the TrbL/VirB6 family.

It is found in the cell membrane. This is an uncharacterized protein from Rickettsia bellii (strain RML369-C).